Here is a 206-residue protein sequence, read N- to C-terminus: tRNA(Phe) 7-((3-amino-3-carboxypropyl)-4-demethylwyosine(37)-N(4))-methyltransferase 2 (206 aa).

Belongs to the TYW3 family.

It carries out the reaction 4-demethyl-7-[(3S)-3-amino-3-carboxypropyl]wyosine(37) in tRNA(Phe) + S-adenosyl-L-methionine = 7-[(3S)-3-amino-3-carboxypropyl]wyosine(37) in tRNA(Phe) + S-adenosyl-L-homocysteine + H(+). In terms of biological role, S-adenosyl-L-methionine-dependent methyltransferase that acts as a component of the wyosine derivatives biosynthesis pathway. Probably methylates N-4 position of wybutosine-86 to produce wybutosine-72. The chain is tRNA(Phe) 7-((3-amino-3-carboxypropyl)-4-demethylwyosine(37)-N(4))-methyltransferase 2 from Pyrococcus furiosus (strain ATCC 43587 / DSM 3638 / JCM 8422 / Vc1).